The chain runs to 345 residues: tRNA N6-adenosine threonylcarbamoyltransferase (345 aa).

His109 and His113 together coordinate Fe cation. Residues 136–140, Asp169, Gly182, Asp186, and Asn284 each bind substrate; that span reads TVSGG. Asp312 contacts Fe cation.

This sequence belongs to the KAE1 / TsaD family. It depends on Fe(2+) as a cofactor.

The protein resides in the cytoplasm. The catalysed reaction is L-threonylcarbamoyladenylate + adenosine(37) in tRNA = N(6)-L-threonylcarbamoyladenosine(37) in tRNA + AMP + H(+). Its function is as follows. Required for the formation of a threonylcarbamoyl group on adenosine at position 37 (t(6)A37) in tRNAs that read codons beginning with adenine. Is involved in the transfer of the threonylcarbamoyl moiety of threonylcarbamoyl-AMP (TC-AMP) to the N6 group of A37, together with TsaE and TsaB. TsaD likely plays a direct catalytic role in this reaction. This is tRNA N6-adenosine threonylcarbamoyltransferase from Prosthecochloris aestuarii (strain DSM 271 / SK 413).